Here is a 197-residue protein sequence, read N- to C-terminus: Holliday junction branch migration complex subunit RuvA (197 aa).

Positions 1 to 63 are domain I; it reads MIEFIRGYVD…EDVLALYGFH (63 aa). The segment at 64–142 is domain II; sequence TRQERMLFAK…AIVPDAFPNL (79 aa). Positions 143 to 149 are flexible linker; it reads FTEPLEE. The interval 149–197 is domain III; the sequence is ETNALSEAIEALKALGYADKEIQKVVPMLRQERLSTEGYIKLALQKLLK.

Belongs to the RuvA family. Homotetramer. Forms an RuvA(8)-RuvB(12)-Holliday junction (HJ) complex. HJ DNA is sandwiched between 2 RuvA tetramers; dsDNA enters through RuvA and exits via RuvB. An RuvB hexamer assembles on each DNA strand where it exits the tetramer. Each RuvB hexamer is contacted by two RuvA subunits (via domain III) on 2 adjacent RuvB subunits; this complex drives branch migration. In the full resolvosome a probable DNA-RuvA(4)-RuvB(12)-RuvC(2) complex forms which resolves the HJ.

The protein localises to the cytoplasm. Functionally, the RuvA-RuvB-RuvC complex processes Holliday junction (HJ) DNA during genetic recombination and DNA repair, while the RuvA-RuvB complex plays an important role in the rescue of blocked DNA replication forks via replication fork reversal (RFR). RuvA specifically binds to HJ cruciform DNA, conferring on it an open structure. The RuvB hexamer acts as an ATP-dependent pump, pulling dsDNA into and through the RuvAB complex. HJ branch migration allows RuvC to scan DNA until it finds its consensus sequence, where it cleaves and resolves the cruciform DNA. The sequence is that of Holliday junction branch migration complex subunit RuvA from Anoxybacillus flavithermus (strain DSM 21510 / WK1).